The following is a 317-amino-acid chain: Single myb histone 6 (317 aa).

The region spanning 1–61 (MGAPKQRWTS…KWRNMNVIVS (61 aa)) is the HTH myb-type domain. The H-T-H motif DNA-binding region spans 28-57 (WRTILKDPEFSSTLCYRSNVDLKDKWRNMN). The region spanning 121–189 (KSHRLDNIIM…KVNRKYRIAP (69 aa)) is the H15 domain. Residues 244–288 (VAAARAVAEAEAIMAEAEAAAKEAEAAEAEAQAAQAFAEAAFLTL) adopt a coiled-coil conformation.

It belongs to the histone H1/H5 family. SMH subfamily. In terms of assembly, forms a homodimer and heterodimers.

The protein resides in the nucleus. Its subcellular location is the chromosome. It is found in the nucleolus. The protein localises to the telomere. Binds preferentially double-stranded telomeric repeats, but may also bind to the single telomeric strand. This chain is Single myb histone 6 (SMH6), found in Zea mays (Maize).